The chain runs to 351 residues: Peroxisomal membrane protein PEX14 (351 aa).

Positions 54-75 (KARTGTVQASPSQQSVVPPRPP) are disordered. The segment covering 60–70 (VQASPSQQSVV) has biased composition (low complexity). An SH3-binding motif is present at residues 83-91 (APPLPERDW). A disordered region spans residues 243 to 351 (APQLSTPPSE…RGIPAWQLNA (109 aa)). The span at 245-258 (QLSTPPSESTSRQS) shows a compositional bias: polar residues. Residues 283-293 (VLSREKDKDVN) are compositionally biased toward basic and acidic residues. Positions 294 to 303 (SDSIAQYEQR) are enriched in polar residues. A compositionally biased stretch (low complexity) spans 320-334 (SASNGGSSTTSGVAG).

It belongs to the peroxin-14 family. In terms of assembly, interacts with PEX13 (via SH3 domain); forming the PEX13-PEX14 docking complex. Interacts with PEX5 (via WxxxF/Y motifs).

Its subcellular location is the peroxisome membrane. In terms of biological role, component of the PEX13-PEX14 docking complex, a translocon channel that specifically mediates the import of peroxisomal cargo proteins bound to PEX5 receptor. The PEX13-PEX14 docking complex forms a large import pore which can be opened to a diameter of about 9 nm. Mechanistically, PEX5 receptor along with cargo proteins associates with the PEX14 subunit of the PEX13-PEX14 docking complex in the cytosol, leading to the insertion of the receptor into the organelle membrane with the concomitant translocation of the cargo into the peroxisome matrix. The chain is Peroxisomal membrane protein PEX14 from Pichia angusta (Yeast).